The following is a 160-amino-acid chain: Lipoprotein signal peptidase (160 aa).

Helical transmembrane passes span 60–80 (IEWL…AFFI) and 84–104 (LPFL…AGTV). Residues aspartate 118 and aspartate 132 contribute to the active site. The helical transmembrane segment at 128–148 (FNIADSCLTVGVIGLLLLYIV) threads the bilayer.

It belongs to the peptidase A8 family.

It is found in the cell membrane. It carries out the reaction Release of signal peptides from bacterial membrane prolipoproteins. Hydrolyzes -Xaa-Yaa-Zaa-|-(S,diacylglyceryl)Cys-, in which Xaa is hydrophobic (preferably Leu), and Yaa (Ala or Ser) and Zaa (Gly or Ala) have small, neutral side chains.. It participates in protein modification; lipoprotein biosynthesis (signal peptide cleavage). Its function is as follows. This protein specifically catalyzes the removal of signal peptides from prolipoproteins. This chain is Lipoprotein signal peptidase, found in Dehalococcoides mccartyi (strain CBDB1).